The following is a 335-amino-acid chain: Probable cyclin-H (335 aa).

The protein belongs to the cyclin family. Cyclin C subfamily.

The protein localises to the nucleus. Functionally, regulates CDK7, the catalytic subunit of the CDK-activating kinase (CAK) enzymatic complex. This chain is Probable cyclin-H (CYCH), found in Echinococcus multilocularis (Fox tapeworm).